The chain runs to 199 residues: TATA-box-binding protein (199 aa).

A run of 2 repeats spans residues 10-86 (IENI…VKLL) and 101-177 (IQNI…YNQL).

The protein belongs to the TBP family.

In terms of biological role, general factor that plays a role in the activation of archaeal genes transcribed by RNA polymerase. Binds specifically to the TATA box promoter element which lies close to the position of transcription initiation. The chain is TATA-box-binding protein from Pyrobaculum calidifontis (strain DSM 21063 / JCM 11548 / VA1).